The chain runs to 80 residues: Cell division protein ZapB (80 aa).

A coiled-coil region spans residues 3-80 (FEVFEKLESK…ALLGKMEDVQ (78 aa)).

It belongs to the ZapB family. In terms of assembly, homodimer. The ends of the coiled-coil dimer bind to each other, forming polymers. Interacts with FtsZ.

The protein localises to the cytoplasm. In terms of biological role, non-essential, abundant cell division factor that is required for proper Z-ring formation. It is recruited early to the divisome by direct interaction with FtsZ, stimulating Z-ring assembly and thereby promoting cell division earlier in the cell cycle. Its recruitment to the Z-ring requires functional FtsA or ZipA. The protein is Cell division protein ZapB of Proteus mirabilis (strain HI4320).